The primary structure comprises 239 residues: Cysteine-rich venom protein 2 (239 aa).

The signal sequence occupies residues 1 to 19 (MIALIVLPILAAVLQQSSG). The 129-residue stretch at 38-166 (VDLHNSLRRS…EYSYFYVCQY (129 aa)) folds into the SCP domain. 7 disulfides stabilise this stretch: cysteine 75/cysteine 153, cysteine 92/cysteine 167, cysteine 148/cysteine 164, cysteine 186/cysteine 193, cysteine 189/cysteine 198, cysteine 202/cysteine 234, and cysteine 219/cysteine 232. The 37-residue stretch at 198-234 (CTNPCPKKISTQLPRFGPQAGCQDKQMQSDCSATCFC) folds into the ShKT domain.

It belongs to the CRISP family. Expressed by the venom gland.

The protein resides in the secreted. In terms of biological role, weakly blocks contraction of smooth muscle elicited by high potassium-induced depolarization, but does not block caffeine-stimulated contraction. May target voltage-gated calcium channels on smooth muscle. This is Cysteine-rich venom protein 2 from Sistrurus catenatus edwardsii (Desert massasauga).